Consider the following 316-residue polypeptide: Elongation factor Ts, mitochondrial (316 aa).

The N-terminal 18 residues, 1 to 18, are a transit peptide targeting the mitochondrion; sequence MFARAPFVRLLSTTSRNL. Residues 245-269 are disordered; it reads EAAESVKTQEGLRSQEGHDPNADPV.

Belongs to the EF-Ts family.

Its subcellular location is the mitochondrion. Associates with the EF-Tu.GDP complex and induces the exchange of GDP to GTP. It remains bound to the aminoacyl-tRNA.EF-Tu.GTP complex up to the GTP hydrolysis stage on the ribosome. The sequence is that of Elongation factor Ts, mitochondrial from Caenorhabditis elegans.